Here is a 177-residue protein sequence, read N- to C-terminus: Putative fimbrin-like protein FimI (177 aa).

A signal peptide spans 1-19 (MIRKGAALVGLVLMSPVIA). A disulfide bond links Cys-40 and Cys-81.

It belongs to the fimbrial protein family.

The protein resides in the fimbrium. This is Putative fimbrin-like protein FimI (fimI) from Salmonella typhi.